The chain runs to 31 residues: Cytochrome b6-f complex subunit 8 (31 aa).

Residues 5-25 (IVSLAWAALMVVFTFSLSLVV) traverse the membrane as a helical segment.

Belongs to the PetN family. In terms of assembly, the 4 large subunits of the cytochrome b6-f complex are cytochrome b6, subunit IV (17 kDa polypeptide, PetD), cytochrome f and the Rieske protein, while the 4 small subunits are PetG, PetL, PetM and PetN. The complex functions as a dimer.

The protein localises to the plastid. It is found in the chloroplast thylakoid membrane. Functionally, component of the cytochrome b6-f complex, which mediates electron transfer between photosystem II (PSII) and photosystem I (PSI), cyclic electron flow around PSI, and state transitions. In Acorus calamus (Sweet flag), this protein is Cytochrome b6-f complex subunit 8.